Here is a 205-residue protein sequence, read N- to C-terminus: Macrophage immunometabolism regulator (205 aa).

The segment at 1-40 (MEVDINGVNRTNNSVPSTTEGSSPSKPDPEKPRCSSTPCS) is disordered. The segment covering 8–25 (VNRTNNSVPSTTEGSSPS) has biased composition (polar residues).

This sequence belongs to the UNC119-binding protein family. As to quaternary structure, interacts with unc119 family proteins; interaction preferentially takes place when unc119 proteins are unliganded with myristoylated proteins.

The protein resides in the cytoplasm. Its subcellular location is the cell projection. The protein localises to the cilium. May play a role in immune regulation through regulation of the macrophage function. May also play a role in trafficking of proteins via its interaction with unc119 family cargo adapters. May play a role in ciliary membrane localization. The protein is Macrophage immunometabolism regulator (macir) of Xenopus tropicalis (Western clawed frog).